A 255-amino-acid chain; its full sequence is Hemin import ATP-binding protein HmuV (255 aa).

The region spanning 2–238 is the ABC transporter domain; sequence LRAHNLHIRR…ESLKAVFGLE (237 aa). 34 to 41 provides a ligand contact to ATP; that stretch reads GPNGAGKS.

The protein belongs to the ABC transporter superfamily. Heme (hemin) importer (TC 3.A.1.14.5) family. As to quaternary structure, the complex is composed of two ATP-binding proteins (HmuV), two transmembrane proteins (HmuU) and a solute-binding protein (HmuT).

The protein resides in the cell inner membrane. Functionally, part of the ABC transporter complex HmuTUV involved in hemin import. Responsible for energy coupling to the transport system. The chain is Hemin import ATP-binding protein HmuV from Pseudomonas fluorescens (strain Pf0-1).